A 515-amino-acid chain; its full sequence is Tetratricopeptide repeat protein 8 (515 aa).

Residues 4–37 form a TPR 1 repeat; that stretch reads EMEPLLRAWSYFRRRKFQLCADLCTQMLEKSPYD. 2 disordered regions span residues 89–109 and 118–137; these read RPGTSLKLPGTNQTGGPTQAV and PITGFLRPSTQSGRPGTMEQ. 7 TPR repeats span residues 225–258, 259–291, 292–325, 326–359, 360–393, 397–430, and 432–464; these read WWWKVQIGKCYYRLGMYREAEKQFKSALKQQEMV, DTFLYLAKVYIILDQPVTALNLFKQGLDKFPGE, VTLLCGIARIYEEMNNSSSAAEYYKEVLKQDNTH, VEAIACIGSNHFYSDQPEVALRFYRRLLQMGVYN, CQLFNNLGLCCFYAQQYDMTLTSFERALSLAENE, ADVWYNLGHIAVGIGDTNLAHQCFRLALVHNNHH, and EAYNNLAVLEMRKGHVEQARALLQTASSLAPHM.

As to quaternary structure, part of BBSome complex, that contains BBS1, BBS2, BBS4, BBS5, BBS7, BBS8/TTC8, BBS9 and BBIP10. Interacts with PCM1. Interacts with CCDC28B. Interacts with PKD1. As to expression, isoform 1 is retina-specific whereas isoform 2 is ubiquitously expressed.

The protein resides in the cytoplasm. Its subcellular location is the cytoskeleton. The protein localises to the microtubule organizing center. It localises to the centrosome. It is found in the centriole. The protein resides in the cell projection. Its subcellular location is the cilium membrane. The protein localises to the centriolar satellite. It localises to the cilium. Its function is as follows. The BBSome complex is thought to function as a coat complex required for sorting of specific membrane proteins to the primary cilia. The BBSome complex is required for ciliogenesis but is dispensable for centriolar satellite function. This ciliogenic function is mediated in part by the Rab8 GDP/GTP exchange factor, which localizes to the basal body and contacts the BBSome. Rab8(GTP) enters the primary cilium and promotes extension of the ciliary membrane. Firstly the BBSome associates with the ciliary membrane and binds to RAB3IP/Rabin8, the guanosyl exchange factor (GEF) for Rab8 and then the Rab8-GTP localizes to the cilium and promotes docking and fusion of carrier vesicles to the base of the ciliary membrane. The BBSome complex, together with the LTZL1, controls SMO ciliary trafficking and contributes to the sonic hedgehog (SHH) pathway regulation. Required for proper BBSome complex assembly and its ciliary localization. This chain is Tetratricopeptide repeat protein 8 (Ttc8), found in Mus musculus (Mouse).